Consider the following 489-residue polypeptide: Serine/threonine-protein kinase dyf-5 (489 aa).

Residues 11–291 (YLMTKRLGDG…ANQSLRYKYF (281 aa)) enclose the Protein kinase domain. ATP-binding positions include 17–25 (LGDGTFGEV) and Lys-40. The Proton acceptor role is filled by Asp-132. 2 disordered regions span residues 366–385 (EKSD…KPTA) and 452–489 (QTGP…KYVK). A compositionally biased stretch (low complexity) spans 458 to 473 (SNQTNNHSANNSHSPN).

The protein belongs to the protein kinase superfamily. CMGC Ser/Thr protein kinase family. RCK subfamily. Mg(2+) is required as a cofactor. Expressed in head neurons including amphid and labial sensory neurons and 3 pairs of neurons in the tail including phasmid sensory neurons. In male, expressed in the tail including the sensory rays and the spicule.

It is found in the perikaryon. The protein localises to the cell projection. Its subcellular location is the dendrite. The protein resides in the axon. It localises to the cilium. The enzyme catalyses L-seryl-[protein] + ATP = O-phospho-L-seryl-[protein] + ADP + H(+). The catalysed reaction is L-threonyl-[protein] + ATP = O-phospho-L-threonyl-[protein] + ADP + H(+). Serine/threonine-protein kinase which is required for ciliogenesis. Regulates the length and the morphology of sensory neuron cilia. In addition, plays a role in the anterograde intraflagellar transport (IFT) in the cilia by regulating the undocking of kinesin-II motor complex (composed of klp-11, klp-20 and kap-1) before reaching the distal segment and the docking of kinesin motor osm-3 onto IFT cargos. This is Serine/threonine-protein kinase dyf-5 from Caenorhabditis elegans.